Reading from the N-terminus, the 651-residue chain is Acetyl-coenzyme A synthetase (651 aa).

CoA is bound by residues 193–196 (RRGK) and Thr-312. ATP is bound by residues 388–390 (GEP), 412–417 (DTWWQT), Asp-501, and Arg-516. A CoA-binding site is contributed by Ser-524. Residues Val-538, His-540, and Val-543 each contribute to the Mg(2+) site. Lys-610 carries the post-translational modification N6-acetyllysine.

The protein belongs to the ATP-dependent AMP-binding enzyme family. It depends on Mg(2+) as a cofactor. Acetylated. Deacetylation by the SIR2-homolog deacetylase activates the enzyme.

It catalyses the reaction acetate + ATP + CoA = acetyl-CoA + AMP + diphosphate. In terms of biological role, catalyzes the conversion of acetate into acetyl-CoA (AcCoA), an essential intermediate at the junction of anabolic and catabolic pathways. AcsA undergoes a two-step reaction. In the first half reaction, AcsA combines acetate with ATP to form acetyl-adenylate (AcAMP) intermediate. In the second half reaction, it can then transfer the acetyl group from AcAMP to the sulfhydryl group of CoA, forming the product AcCoA. The polypeptide is Acetyl-coenzyme A synthetase (Streptomyces coelicolor (strain ATCC BAA-471 / A3(2) / M145)).